The chain runs to 800 residues: Nucleolar complex protein 3 homolog (800 aa).

Composition is skewed to basic residues over residues 1–19 (MGPA…RKLL) and 42–53 (KKQRKEQRKLHK). 2 disordered regions span residues 1-91 (MGPA…TDMM) and 167-197 (KPVL…SAPL). Positions 65–74 (PLERYKKRPE) are enriched in basic and acidic residues. Residues 449–490 (SFKEKRKNLSRMQRKWKKAEEKLQKELLEAEATESKEKKIKL) are a coiled coil. The disordered stretch occupies residues 780–800 (LQEEPEQMSLDFTSPHTQQEP). Over residues 789–800 (LDFTSPHTQQEP) the composition is skewed to polar residues.

This sequence belongs to the CBF/MAK21 family.

The protein localises to the nucleus. It is found in the nucleolus. The polypeptide is Nucleolar complex protein 3 homolog (noc3l) (Danio rerio (Zebrafish)).